Consider the following 144-residue polypeptide: Aspartate carbamoyltransferase regulatory chain (144 aa).

4 residues coordinate Zn(2+): C103, C108, C132, and C135.

This sequence belongs to the PyrI family. As to quaternary structure, contains catalytic and regulatory chains. It depends on Zn(2+) as a cofactor.

Involved in allosteric regulation of aspartate carbamoyltransferase. The chain is Aspartate carbamoyltransferase regulatory chain from Clostridium tetani (strain Massachusetts / E88).